The following is a 333-amino-acid chain: Protoheme IX farnesyltransferase (333 aa).

The next 7 helical transmembrane spans lie at 64-84 (LICT…LNCL), 110-130 (TVFL…VSGV), 133-153 (LAAG…TVIL), 161-181 (IVFG…AATG), 189-209 (WLFG…AILL), 246-266 (IMGV…LLPF), and 287-307 (AKSL…LLLI).

It belongs to the UbiA prenyltransferase family. Protoheme IX farnesyltransferase subfamily.

Its subcellular location is the cell inner membrane. The catalysed reaction is heme b + (2E,6E)-farnesyl diphosphate + H2O = Fe(II)-heme o + diphosphate. The protein operates within porphyrin-containing compound metabolism; heme O biosynthesis; heme O from protoheme: step 1/1. Functionally, converts heme B (protoheme IX) to heme O by substitution of the vinyl group on carbon 2 of heme B porphyrin ring with a hydroxyethyl farnesyl side group. The sequence is that of Protoheme IX farnesyltransferase from Prochlorococcus marinus (strain AS9601).